The following is a 476-amino-acid chain: MADNSTSRFYTNLLIANYLKHNGLEDTLAAFIRETALPLSALEKSDSSNSNVGEIPLEDLQSVVEDRIYYKRRSFKDRFKTLSINDDLAPIDNAKYGIQPWNHSLKFSIDVKLNKSLPKDTLFISATFTEDSKYILLSSATGYLVIYDIEKATSKSFKINEKVKSIVKLYGPIGSSGYQYVCPMNGSFYLLNNDFELVNNAVWKIHARMITHIKICNVTESSWFVITSGMDNFLRLSLLEIKNGNTFLTKLSEIKLASNCTSLNVIANGDGNGQNSFSVFLTRAEYTHIACYSIIDAKNLVHSYNIALNNAEFSTYAFNIRDVMAVDYVHSNTKDTIGLSPSTMLVVATSHKPYMRLILVEIPMNTGHPKAMKLDKVQTYYDKILRNFATEIYQDDFSLPILGKLESSNGVLVGNDEGIYSVDLMTGDSRILNIPGEANSLHDRIKCMDISKDQMRMVAGTSTKSIYILNVIRNAQ.

Residues 7 to 39 enclose the LisH domain; sequence SRFYTNLLIANYLKHNGLEDTLAAFIRETALPL.

This is an uncharacterized protein from Saccharomyces cerevisiae (strain ATCC 204508 / S288c) (Baker's yeast).